We begin with the raw amino-acid sequence, 186 residues long: Potassium-transporting ATPase KdpC subunit 1 (186 aa).

The helical transmembrane segment at 10–30 (LTIITMVLCGFLFPLAITLIG) threads the bilayer.

The protein belongs to the KdpC family. In terms of assembly, the system is composed of three essential subunits: KdpA, KdpB and KdpC.

The protein localises to the cell membrane. Part of the high-affinity ATP-driven potassium transport (or Kdp) system, which catalyzes the hydrolysis of ATP coupled with the electrogenic transport of potassium into the cytoplasm. This subunit acts as a catalytic chaperone that increases the ATP-binding affinity of the ATP-hydrolyzing subunit KdpB by the formation of a transient KdpB/KdpC/ATP ternary complex. The polypeptide is Potassium-transporting ATPase KdpC subunit 1 (Staphylococcus aureus (strain Mu50 / ATCC 700699)).